The primary structure comprises 346 residues: uncharacterized protein (346 aa).

Residues 16 to 36 (ILGIIICIILIVGFFISFDST) form a helical membrane-spanning segment.

The protein resides in the membrane. This is an uncharacterized protein from Methanocaldococcus jannaschii (strain ATCC 43067 / DSM 2661 / JAL-1 / JCM 10045 / NBRC 100440) (Methanococcus jannaschii).